Reading from the N-terminus, the 376-residue chain is tRNA-specific 2-thiouridylase MnmA (376 aa).

Residues 10-17 (GMSGGVDS) and M36 each bind ATP. Residues 96 to 98 (NPD) are interaction with target base in tRNA. C101 (nucleophile) is an active-site residue. C101 and C198 are disulfide-bonded. Position 125 (G125) interacts with ATP. The interval 148 to 150 (KDQ) is interaction with tRNA. C198 serves as the catalytic Cysteine persulfide intermediate. Residues 305–306 (RY) form an interaction with tRNA region.

It belongs to the MnmA/TRMU family.

The protein localises to the cytoplasm. It carries out the reaction S-sulfanyl-L-cysteinyl-[protein] + uridine(34) in tRNA + AH2 + ATP = 2-thiouridine(34) in tRNA + L-cysteinyl-[protein] + A + AMP + diphosphate + H(+). Its function is as follows. Catalyzes the 2-thiolation of uridine at the wobble position (U34) of tRNA, leading to the formation of s(2)U34. This chain is tRNA-specific 2-thiouridylase MnmA, found in Protochlamydia amoebophila (strain UWE25).